Here is a 163-residue protein sequence, read N- to C-terminus: Shikimate kinase (163 aa).

An ATP-binding site is contributed by 10–15; the sequence is GVGKTT. Thr-14 is a Mg(2+) binding site. Substrate is bound by residues Asp-28, Arg-52, and Gly-75. Arg-116 is an ATP binding site. Arg-134 provides a ligand contact to substrate. Arg-151 contacts ATP.

It belongs to the shikimate kinase family. Monomer. Mg(2+) is required as a cofactor.

The protein localises to the cytoplasm. The enzyme catalyses shikimate + ATP = 3-phosphoshikimate + ADP + H(+). It functions in the pathway metabolic intermediate biosynthesis; chorismate biosynthesis; chorismate from D-erythrose 4-phosphate and phosphoenolpyruvate: step 5/7. In terms of biological role, catalyzes the specific phosphorylation of the 3-hydroxyl group of shikimic acid using ATP as a cosubstrate. The sequence is that of Shikimate kinase from Streptococcus pyogenes serotype M12 (strain MGAS2096).